Here is a 449-residue protein sequence, read N- to C-terminus: Tubulin alpha chain (449 aa).

Positions 1 to 4 (MREC) match the MREC motif motif. Residue glutamine 11 participates in GTP binding. Lysine 40 is subject to N6-acetyllysine. Residues glutamate 71, serine 140, glycine 144, threonine 145, threonine 179, asparagine 206, and asparagine 228 each contribute to the GTP site. Glutamate 71 contributes to the Mg(2+) binding site. Glutamate 254 is a catalytic residue. At glutamate 443 the chain carries 5-glutamyl polyglutamate.

It belongs to the tubulin family. Dimer of alpha and beta chains. A typical microtubule is a hollow water-filled tube with an outer diameter of 25 nm and an inner diameter of 15 nM. Alpha-beta heterodimers associate head-to-tail to form protofilaments running lengthwise along the microtubule wall with the beta-tubulin subunit facing the microtubule plus end conferring a structural polarity. Microtubules usually have 13 protofilaments but different protofilament numbers can be found in some organisms and specialized cells. Requires Mg(2+) as cofactor. Some glutamate residues at the C-terminus are polyglycylated, resulting in polyglycine chains on the gamma-carboxyl group. Glycylation is mainly limited to tubulin incorporated into axonemes (cilia and flagella) whereas glutamylation is prevalent in neuronal cells, centrioles, axonemes, and the mitotic spindle. Both modifications can coexist on the same protein on adjacent residues, and lowering polyglycylation levels increases polyglutamylation, and reciprocally. The precise function of polyglycylation is still unclear. Post-translationally, some glutamate residues at the C-terminus are polyglutamylated, resulting in polyglutamate chains on the gamma-carboxyl group. Polyglutamylation plays a key role in microtubule severing by spastin (SPAST). SPAST preferentially recognizes and acts on microtubules decorated with short polyglutamate tails: severing activity by SPAST increases as the number of glutamates per tubulin rises from one to eight, but decreases beyond this glutamylation threshold. In terms of processing, acetylation of alpha chains at Lys-40 is located inside the microtubule lumen. This modification has been correlated with increased microtubule stability, intracellular transport and ciliary assembly. Undergoes a tyrosination/detyrosination cycle, the cyclic removal and re-addition of a C-terminal tyrosine residue by the enzymes tubulin tyrosine carboxypeptidase (MATCAP1, VASH1 or VASH2) and tubulin tyrosine ligase (TTL), respectively. Post-translationally, tyrosination promotes microtubule interaction with CAP-Gly microtubule plus-end tracking proteins. Tyrosinated tubulins regulate the initiation of dynein-driven motility. In terms of processing, detyrosination is involved in metaphase plate congression by guiding chromosomes during mitosis. Detyrosination increases microtubules-dependent mechanotransduction in dystrophic cardiac and skeletal muscle. In cardiomyocytes, detyrosinated microtubules are required to resist to contractile compression during contraction.

It localises to the cytoplasm. The protein localises to the cytoskeleton. It catalyses the reaction GTP + H2O = GDP + phosphate + H(+). Functionally, tubulin is the major constituent of microtubules, a cylinder consisting of laterally associated linear protofilaments composed of alpha- and beta-tubulin heterodimers. Microtubules grow by the addition of GTP-tubulin dimers to the microtubule end, where a stabilizing cap forms. Below the cap, tubulin dimers are in GDP-bound state, owing to GTPase activity of alpha-tubulin. The sequence is that of Tubulin alpha chain (tuba) from Xenopus tropicalis (Western clawed frog).